The following is a 117-amino-acid chain: cAMP-regulated phosphoprotein 19-A (117 aa).

Basic and acidic residues predominate over residues 1 to 37 (MSGENQETKAQEESSALEQKEIDDKVVSPEKSEEIKL). Residues 1–54 (MSGENQETKAQEESSALEQKEIDDKVVSPEKSEEIKLKARYPNLGPKPGGSDFL) form a disordered region. Position 28 is a phosphoserine; by CDK2 (Ser28). Ser67 is modified (phosphoserine; by GWL). Residues 78-117 (KNKQLPTAASDKTEVTGDHIPTPQDLPQRKPSLVASKLAG) are disordered. Thr99 carries the phosphothreonine; by CDK2 modification. Residue Ser109 is modified to Phosphoserine; by PKA.

This sequence belongs to the endosulfine family. As to quaternary structure, interacts (when phosphorylated at Ser-67) with ppp2r2d. Phosphorylation at Ser-67 by gwl during mitosis is essential for interaction with ppp2r2d (PR55-delta) and subsequent inactivation of PP2A. Phosphorylated by PKA.

The protein resides in the cytoplasm. In terms of biological role, protein phosphatase inhibitor that specifically inhibits protein phosphatase 2A (PP2A) during mitosis. When phosphorylated at Ser-67 during mitosis, specifically interacts with ppp2r2d (PR55-delta) and inhibits its activity, leading to inactivation of PP2A, an essential condition to keep cyclin-B1-CDK1 activity high during M phase. In Xenopus laevis (African clawed frog), this protein is cAMP-regulated phosphoprotein 19-A (arpp19-a).